The sequence spans 33 residues: Pardaxin P-2 (33 aa).

The protein belongs to the pardaxin family. In aqueous solution exists as a tetramer.

It localises to the secreted. It is found in the target cell membrane. In terms of biological role, exhibits unusual shark repellent and surfactant properties. Forms voltage-dependent, ion-permeable channels in membranes. At high concentration causes cell membrane lysis. In Pardachirus pavoninus (Peacock sole), this protein is Pardaxin P-2.